The primary structure comprises 494 residues: PTS system cellobiose-specific EIIC component (494 aa).

Residues Met-8 to Phe-481 form the PTS EIIC type-3 domain. 9 consecutive transmembrane segments (helical) span residues Phe-32 to Val-52, Ile-92 to Trp-112, Ala-119 to Leu-139, Ala-188 to Leu-208, Phe-227 to Ile-247, Ile-274 to Gly-294, Ala-355 to Phe-375, Val-406 to Ile-426, and Ala-463 to Ile-483.

Its subcellular location is the cell membrane. In terms of biological role, the phosphoenolpyruvate-dependent sugar phosphotransferase system (PTS), a major carbohydrate active transport system, catalyzes the phosphorylation of incoming sugar substrates concomitant with their translocation across the cell membrane. Involved in cellobiose transport with PtcA and PtcB. This system can also transport lactose. The protein is PTS system cellobiose-specific EIIC component of Lactococcus lactis subsp. lactis (strain IL1403) (Streptococcus lactis).